Consider the following 196-residue polypeptide: MFQLLSFLLSGEATAVERIITDACPVYAPFFGAMGVTAALVFTVMGAAYGTAKASVGISNMGVMKPDLVIKAFIPVIFAGVIAIYGLIICVILVGGIKPNANYTLMKSFTDLGAGLTVGLCGLAAGMAIGIVGDSGVRAFGQQPKLYVIMMLILIFSEALGLYGLIIGILLSSVSDTYCPGQALVPLNSGNVIGKN.

The Lumenal portion of the chain corresponds to 1 to 25 (MFQLLSFLLSGEATAVERIITDACP). The chain crosses the membrane as a helical span at residues 26 to 46 (VYAPFFGAMGVTAALVFTVMG). The Cytoplasmic segment spans residues 47-72 (AAYGTAKASVGISNMGVMKPDLVIKA). A helical membrane pass occupies residues 73–93 (FIPVIFAGVIAIYGLIICVIL). The Lumenal portion of the chain corresponds to 94–111 (VGGIKPNANYTLMKSFTD). Residues 112–132 (LGAGLTVGLCGLAAGMAIGIV) form a helical membrane-spanning segment. Over 133–150 (GDSGVRAFGQQPKLYVIM) the chain is Cytoplasmic. The helical transmembrane segment at 151–171 (MLILIFSEALGLYGLIIGILL) threads the bilayer. At 172-196 (SSVSDTYCPGQALVPLNSGNVIGKN) the chain is on the lumenal side.

This sequence belongs to the V-ATPase proteolipid subunit family. As to quaternary structure, V-ATPase is a heteromultimeric enzyme composed of a peripheral catalytic V1 complex (main components: subunits A, B, C, D, E, and F) attached to an integral membrane V0 proton pore complex (main component: the proteolipid protein; which is present as a hexamer that forms the proton-conducting pore).

The protein localises to the vacuole membrane. In terms of biological role, proton-conducting pore forming subunit of the membrane integral V0 complex of vacuolar ATPase. V-ATPase is responsible for acidifying a variety of intracellular compartments in eukaryotic cells. This Dictyostelium discoideum (Social amoeba) protein is V-type proton ATPase proteolipid subunit (vatP).